The primary structure comprises 813 residues: Palmitoyltransferase AKR1 (813 aa).

Residues 1–83 (MAKKKSKSKS…PVTTSNETDP (83 aa)) are disordered. The Cytoplasmic segment spans residues 1 to 387 (MAKKKSKSKS…KPWVSAKLGK (387 aa)). Positions 9 to 24 (KSSSPKPKVSSTAAKP) are enriched in low complexity. Positions 28 to 46 (DNQQNIENVQDSPSALQQQ) are enriched in polar residues. Residues 47–78 (SATAEESENTATTATPSEGTTATTESSPVTTS) show a composition bias toward low complexity. ANK repeat units lie at residues 133–162 (PTLA…VLVN), 167–196 (DEIT…NPNQ), 201–231 (LKAS…DPNL), 235–264 (QTYN…STDS), 276–305 (SNRT…DVSK), and 309–338 (SLFI…DIYF). The chain crosses the membrane as a helical span at residues 388 to 408 (IITFLTPYFLLPLSFNVLSMG). The Lumenal segment spans residues 409–412 (GDQG). A helical membrane pass occupies residues 413-433 (GFIIPKLILAIGILGGGIYLL). The Cytoplasmic segment spans residues 434-452 (NKLIISQYIFDDKKLAKSP). The helical transmembrane segment at 453 to 473 (ILAGVFSATAFWSVLVWLYNI) threads the bilayer. The Lumenal portion of the chain corresponds to 474-485 (LPTTFIHNFFAN). A helical transmembrane segment spans residues 486–506 (VIMAILIAIFTWSFFKAMFIN). The Cytoplasmic segment spans residues 507 to 579 (PGFVPTPADN…YNDIGVRNHK (73 aa)). One can recognise a DHHC domain in the interval 536–586 (HFCVNSFVRKPLRSRYSKHNKRLIARFDHSCPWVYNDIGVRNHKIFITFVY). The S-palmitoyl cysteine intermediate role is filled by cysteine 566. Residues 580–600 (IFITFVYSLNMAIFVFLYLSL) traverse the membrane as a helical segment. Over 601–642 (QYFDKVKDQYDSDDEGEGEGFVCSILGDDMCYGYKNHHFHFN) the chain is Lumenal. A helical membrane pass occupies residues 643–663 (VFMWDLFQCVWVSFLCIVQTF). Residues 664–813 (QILKGLTTWE…VDYYTLYSYH (150 aa)) are Cytoplasmic-facing.

Belongs to the DHHC palmitoyltransferase family. AKR/ZDHHC17 subfamily.

The protein resides in the early endosome membrane. It is found in the golgi apparatus membrane. The catalysed reaction is L-cysteinyl-[protein] + hexadecanoyl-CoA = S-hexadecanoyl-L-cysteinyl-[protein] + CoA. Palmitoyltransferase specific for casein kinase 1. This Candida albicans (strain SC5314 / ATCC MYA-2876) (Yeast) protein is Palmitoyltransferase AKR1 (AKR1).